The sequence spans 382 residues: Homoserine O-succinyltransferase (382 aa).

One can recognise an AB hydrolase-1 domain in the interval 51–359 (NAILVCHALS…EATQGHDAFL (309 aa)). Serine 157 (nucleophile) is an active-site residue. Arginine 227 serves as a coordination point for substrate. Catalysis depends on residues aspartate 322 and histidine 355. Aspartate 356 is a binding site for substrate.

It belongs to the AB hydrolase superfamily. MetX family. In terms of assembly, homodimer.

It is found in the cytoplasm. The enzyme catalyses L-homoserine + succinyl-CoA = O-succinyl-L-homoserine + CoA. The protein operates within amino-acid biosynthesis; L-methionine biosynthesis via de novo pathway; O-succinyl-L-homoserine from L-homoserine: step 1/1. Transfers a succinyl group from succinyl-CoA to L-homoserine, forming succinyl-L-homoserine. The protein is Homoserine O-succinyltransferase of Halorhodospira halophila (strain DSM 244 / SL1) (Ectothiorhodospira halophila (strain DSM 244 / SL1)).